The primary structure comprises 120 residues: NAD(P)H-quinone oxidoreductase subunit 3, chloroplastic (120 aa).

3 consecutive transmembrane segments (helical) span residues isoleucine 9–glycine 29, methionine 64–methionine 84, and valine 88–serine 108.

Belongs to the complex I subunit 3 family. NDH is composed of at least 16 different subunits, 5 of which are encoded in the nucleus.

The protein resides in the plastid. The protein localises to the chloroplast thylakoid membrane. It catalyses the reaction a plastoquinone + NADH + (n+1) H(+)(in) = a plastoquinol + NAD(+) + n H(+)(out). It carries out the reaction a plastoquinone + NADPH + (n+1) H(+)(in) = a plastoquinol + NADP(+) + n H(+)(out). In terms of biological role, NDH shuttles electrons from NAD(P)H:plastoquinone, via FMN and iron-sulfur (Fe-S) centers, to quinones in the photosynthetic chain and possibly in a chloroplast respiratory chain. The immediate electron acceptor for the enzyme in this species is believed to be plastoquinone. Couples the redox reaction to proton translocation, and thus conserves the redox energy in a proton gradient. This chain is NAD(P)H-quinone oxidoreductase subunit 3, chloroplastic, found in Liriodendron tulipifera (Tuliptree).